The sequence spans 77 residues: Acyl carrier protein (77 aa).

The Carrier domain occupies 2–77 (SDVAERVKKI…DAIDFITANS (76 aa)). At Ser-37 the chain carries O-(pantetheine 4'-phosphoryl)serine.

It belongs to the acyl carrier protein (ACP) family. Post-translationally, 4'-phosphopantetheine is transferred from CoA to a specific serine of apo-ACP by AcpS. This modification is essential for activity because fatty acids are bound in thioester linkage to the sulfhydryl of the prosthetic group.

It is found in the cytoplasm. It participates in lipid metabolism; fatty acid biosynthesis. Its function is as follows. Carrier of the growing fatty acid chain in fatty acid biosynthesis. The chain is Acyl carrier protein from Paramagnetospirillum magneticum (strain ATCC 700264 / AMB-1) (Magnetospirillum magneticum).